Here is a 442-residue protein sequence, read N- to C-terminus: Cytokine receptor-like factor 3 (442 aa).

Methionine 1 carries the post-translational modification N-acetylmethionine. The stretch at 10-57 (ELLLQEARENVEAAQSYRRELGHRLEGLREARRQIKESASQTRDVLKQ) forms a coiled coil. Positions 181-274 (PPVQIEELIE…PQIGHSTLVP (94 aa)) constitute a Fibronectin type-III domain.

This sequence belongs to the cytokine receptor-like factor 3 family. As to expression, expressed in several embryonic and adult tissues, including adult and fetal brain, liver, spleen and pancreas. Expressed in adult, but not fetal kidney. Expressed in skin and squamous cell carcinoma (SCC) and in several other cancer types. Also detected in lesion actinic keratosis (AK).

It is found in the cytoplasm. May play a role in the negative regulation of cell cycle progression. This Homo sapiens (Human) protein is Cytokine receptor-like factor 3 (CRLF3).